Reading from the N-terminus, the 269-residue chain is Putative hydro-lyase M446_2125 (269 aa).

The protein belongs to the D-glutamate cyclase family.

This is Putative hydro-lyase M446_2125 from Methylobacterium sp. (strain 4-46).